A 245-amino-acid chain; its full sequence is Ribonuclease PH (245 aa).

Phosphate is bound by residues arginine 86 and 124-126 (GTR).

This sequence belongs to the RNase PH family. In terms of assembly, homohexameric ring arranged as a trimer of dimers. It has been suggested that the active form is the dimer which binds tRNA and that the hexameric form protects the substrate recognition loop (approximately residues 65-82) from proteolysis.

It carries out the reaction tRNA(n+1) + phosphate = tRNA(n) + a ribonucleoside 5'-diphosphate. Functionally, phosphorolytic 3'-5' exoribonuclease that plays an important role in tRNA 3'-end maturation. Removes nucleotide residues following the 3'-CCA terminus of tRNAs; can also add nucleotides to the ends of RNA molecules by using nucleoside diphosphates as substrates, but this may not be physiologically important. Probably plays a role in initiation of 16S rRNA degradation (leading to ribosome degradation) during starvation. Plays a role in the secondary pathway of 23S rRNA 3' end maturation. The protein is Ribonuclease PH of Bacillus subtilis (strain 168).